A 383-amino-acid chain; its full sequence is Thioredoxin reductase 2 (383 aa).

FAD contacts are provided by residues 66–69, 87–88, 95–100, Asn-109, Val-142, Cys-200, Asp-345, and 352–354; these read SGPA, FE, IAPGGQ, and RQA. A disulfide bridge links Cys-197 with Cys-200.

It belongs to the class-II pyridine nucleotide-disulfide oxidoreductase family. Homodimer. FAD is required as a cofactor.

It is found in the cytoplasm. The protein localises to the mitochondrion matrix. The catalysed reaction is [thioredoxin]-dithiol + NADP(+) = [thioredoxin]-disulfide + NADPH + H(+). Possesses thioredoxin-disulfide reductase activity towards thioredoxins O1, O2 and F3. In Arabidopsis thaliana (Mouse-ear cress), this protein is Thioredoxin reductase 2 (NTR2).